The chain runs to 114 residues: ATP-dependent Clp protease adapter protein ClpS (114 aa).

This sequence belongs to the ClpS family. Binds to the N-terminal domain of the chaperone ClpA.

Its function is as follows. Involved in the modulation of the specificity of the ClpAP-mediated ATP-dependent protein degradation. The polypeptide is ATP-dependent Clp protease adapter protein ClpS (Bdellovibrio bacteriovorus (strain ATCC 15356 / DSM 50701 / NCIMB 9529 / HD100)).